The chain runs to 228 residues: Heptaprenylglyceryl phosphate synthase (228 aa).

K12 serves as a coordination point for sn-glycerol 1-phosphate. Mg(2+) is bound by residues D14 and S40. Residues 158 to 163 (YLEYSG), G188, and 208 to 209 (GN) each bind sn-glycerol 1-phosphate.

Belongs to the GGGP/HepGP synthase family. Group I subfamily. In terms of assembly, homodimer. The cofactor is Mg(2+).

It carries out the reaction sn-glycerol 1-phosphate + all-trans-heptaprenyl diphosphate = 3-heptaprenyl-sn-glycero-1-phosphate + diphosphate. It participates in membrane lipid metabolism; glycerophospholipid metabolism. Prenyltransferase that catalyzes in vivo the transfer of the heptaprenyl moiety of heptaprenyl pyrophosphate (HepPP; 35 carbon atoms) to the C3 hydroxyl of sn-glycerol-1-phosphate (G1P), producing heptaprenylglyceryl phosphate (HepGP). This reaction is an ether-bond-formation step in the biosynthesis of archaea-type G1P-based membrane lipids found in Bacillales. To a much lesser extent, is also able to use geranyl diphosphate (GPP; C10) and geranylgeranyl diphosphate (GGPP; C20) as the prenyl donors, but not farnesyl pyrophosphate (FPP; C15). Cannot use glycerol-3-phosphate (G3P) or 3-phosphoglycerate (3PG) as an acceptor. The chain is Heptaprenylglyceryl phosphate synthase from Bacillus subtilis (strain 168).